The sequence spans 95 residues: UPF0235 protein A2cp1_1215 (95 aa).

It belongs to the UPF0235 family.

The polypeptide is UPF0235 protein A2cp1_1215 (Anaeromyxobacter dehalogenans (strain 2CP-1 / ATCC BAA-258)).